A 168-amino-acid chain; its full sequence is CASP-like protein UU-1 (168 aa).

Over 1–17 (MVELESQEAVTVASTAD) the chain is Cytoplasmic. Residues 18-38 (IAVDVSLRLLAAATSLAAAVV) form a helical membrane-spanning segment. Topologically, residues 39-54 (VAANHQQRWGIRVDFT) are extracellular. The helical transmembrane segment at 55–75 (LFQVWIGFVAVNLVCTVYAAA) threads the bilayer. Topologically, residues 76–95 (TAAAAARKAMGRWWLHHADA) are cytoplasmic. Residues 96–116 (VVVNLEAAATAGAGAIGSIAM) traverse the membrane as a helical segment. Residues 117 to 136 (WGNEASGWYAVCRLYRRYCN) are Extracellular-facing. Residues 137–157 (AGAAALALSLAAVLLLGVACA) form a helical membrane-spanning segment. Over 158 to 168 (RSRYPKMPPTT) the chain is Cytoplasmic.

It belongs to the Casparian strip membrane proteins (CASP) family. As to quaternary structure, homodimer and heterodimers.

The protein localises to the cell membrane. The chain is CASP-like protein UU-1 from Oryza sativa subsp. japonica (Rice).